We begin with the raw amino-acid sequence, 369 residues long: Anthranilate phosphoribosyltransferase (369 aa).

5-phospho-alpha-D-ribose 1-diphosphate contacts are provided by residues Gly-111, 114–115 (GD), Thr-119, 121–124 (NIST), 139–147 (KHGNRGVSS), and Ser-151. An anthranilate-binding site is contributed by Gly-111. A Mg(2+)-binding site is contributed by Ser-123. Asn-142 lines the anthranilate pocket. Arg-197 contributes to the anthranilate binding site. The Mg(2+) site is built by Asp-256 and Glu-257.

The protein belongs to the anthranilate phosphoribosyltransferase family. As to quaternary structure, homodimer. It depends on Mg(2+) as a cofactor.

The enzyme catalyses N-(5-phospho-beta-D-ribosyl)anthranilate + diphosphate = 5-phospho-alpha-D-ribose 1-diphosphate + anthranilate. Its pathway is amino-acid biosynthesis; L-tryptophan biosynthesis; L-tryptophan from chorismate: step 2/5. In terms of biological role, catalyzes the transfer of the phosphoribosyl group of 5-phosphorylribose-1-pyrophosphate (PRPP) to anthranilate to yield N-(5'-phosphoribosyl)-anthranilate (PRA). This is Anthranilate phosphoribosyltransferase from Cupriavidus pinatubonensis (strain JMP 134 / LMG 1197) (Cupriavidus necator (strain JMP 134)).